The chain runs to 363 residues: Spore germination protein YndE (363 aa).

10 helical membrane-spanning segments follow: residues 8–28 (ITTA…GVLT), 41–61 (DGWI…MIIA), 84–104 (LGHL…AFEV), 113–133 (FFLL…WIGL), 149–169 (MIFP…LGIF), 189–209 (VKTT…VAFM), 218–238 (AVVI…IMVI), 273–293 (FLLV…FYAA), 305–325 (PLSC…MPKN), and 335–355 (TVSH…LVIS).

This sequence belongs to the amino acid-polyamine-organocation (APC) superfamily. Spore germination protein (SGP) (TC 2.A.3.9) family.

Its subcellular location is the cell membrane. Involved in the germinative response to L-alanine. Could be an amino acid transporter. This is Spore germination protein YndE (yndE) from Bacillus subtilis (strain 168).